Here is a 156-residue protein sequence, read N- to C-terminus: Small ribosomal subunit protein uS7 (156 aa).

It belongs to the universal ribosomal protein uS7 family. As to quaternary structure, part of the 30S ribosomal subunit. Contacts proteins S9 and S11.

Its function is as follows. One of the primary rRNA binding proteins, it binds directly to 16S rRNA where it nucleates assembly of the head domain of the 30S subunit. Is located at the subunit interface close to the decoding center, probably blocks exit of the E-site tRNA. This chain is Small ribosomal subunit protein uS7, found in Photobacterium profundum (strain SS9).